The sequence spans 836 residues: Glutamate receptor ionotropic, kainate glr-3 (836 aa).

A signal peptide spans M1 to C19. The Extracellular portion of the chain corresponds to Y20–T523. C76 and C320 are joined by a disulfide. N-linked (GlcNAc...) asparagine glycosylation is found at N225, N257, N356, N391, and N419. Residues S478–T480 and R485 each bind L-glutamate. The chain crosses the membrane as a helical span at residues Q524 to A544. Residues K545 to G600 lie on the Cytoplasmic side of the membrane. The helical transmembrane segment at I601–L621 threads the bilayer. Topologically, residues T622–S780 are extracellular. S651 to T652 is a binding site for L-glutamate. Residue N657 is glycosylated (N-linked (GlcNAc...) asparagine). E699 contributes to the L-glutamate binding site. Residues I781 to F801 traverse the membrane as a helical segment. Topologically, residues E802–N836 are cytoplasmic.

It belongs to the glutamate-gated ion channel (TC 1.A.10.1) family. Expressed in the intestine and in the ASER neuron. Also expressed in the thermosensitive RIA interneuron.

The protein localises to the cell membrane. Its subcellular location is the postsynaptic cell membrane. With respect to regulation, activated by low temperature of 18 degrees Celsius in ASER neuron. Functionally, ionotropic glutamate receptor. Activation by glutamate requires additional verification. L-glutamate acts as an excitatory neurotransmitter at many synapses in the central nervous system. Binding of the excitatory neurotransmitter L-glutamate induces a conformation change, leading to the opening of the cation channel, and thereby converts the chemical signal to an electrical impulse. The receptor then desensitizes rapidly and enters a transient inactive state, characterized by the presence of bound agonist. Independent of its ionotropic glutamate receptor activity, acts as a thermoreceptor in the ASER neuron where it triggers a calcium response to activate cold avoidance behavior in response to temperatures below 19 degrees Celsius. Possibly functions as a metabotropic cold receptor and acts upstream of the G(o) G protein goa-1 in the ASER neuron. Also functions in cold sensing in the intestine. This is Glutamate receptor ionotropic, kainate glr-3 from Caenorhabditis elegans.